A 161-amino-acid polypeptide reads, in one-letter code: Assembly protein P7 (161 aa).

In terms of assembly, homodimer. Part of the packaging complex composed of RDRP, P4 and P7. Interacts with RDRP.

The protein resides in the virion. Its function is as follows. Assembly protein part of the packaging complex that packages the viral RNA segments, replicate them into a double-stranded form and transcribe them. Required for efficient procapsid assembly. Necessary for stable packaging. May stabilize the RNA-dependent RNA polymerase (RdRP) in its position at the three-fold axis on the inner side of empty-unexpanded procapsids. Could play a role in viral RNA recognition. Seems to be involved in the regulation of plus strand synthesis (transcription) as a fidelity factor. This is Assembly protein P7 (P7) from Pseudomonas phage phi6 (Bacteriophage phi-6).